Consider the following 283-residue polypeptide: Protein/nucleic acid deglycase HchA (283 aa).

Zn(2+) is bound by residues histidine 86, glutamate 91, and histidine 123. Residue cysteine 185 is the Nucleophile of the active site.

Belongs to the peptidase C56 family. HchA subfamily. In terms of assembly, homodimer.

The protein localises to the cytoplasm. It carries out the reaction N(omega)-(1-hydroxy-2-oxopropyl)-L-arginyl-[protein] + H2O = lactate + L-arginyl-[protein] + H(+). The catalysed reaction is N(6)-(1-hydroxy-2-oxopropyl)-L-lysyl-[protein] + H2O = lactate + L-lysyl-[protein] + H(+). It catalyses the reaction S-(1-hydroxy-2-oxopropyl)-L-cysteinyl-[protein] + H2O = lactate + L-cysteinyl-[protein] + H(+). The enzyme catalyses N(omega)-(1-hydroxy-2-oxoethyl)-L-arginyl-[protein] + H2O = L-arginyl-[protein] + glycolate + H(+). It carries out the reaction N(6)-(1-hydroxy-2-oxoethyl)-L-lysyl-[protein] + H2O = glycolate + L-lysyl-[protein] + H(+). The catalysed reaction is S-(1-hydroxy-2-oxoethyl)-L-cysteinyl-[protein] + H2O = glycolate + L-cysteinyl-[protein] + H(+). It catalyses the reaction N(2)-(1-hydroxy-2-oxopropyl)-dGTP + H2O = lactate + dGTP + H(+). The enzyme catalyses N(2)-(1-hydroxy-2-oxopropyl)-GTP + H2O = lactate + GTP + H(+). It carries out the reaction N(2)-(1-hydroxy-2-oxopropyl)-GDP + H2O = lactate + GDP + H(+). The catalysed reaction is N(2)-(1-hydroxy-2-oxopropyl)-GMP + H2O = lactate + GMP + H(+). It catalyses the reaction N(2)-(1-hydroxy-2-oxoethyl)-dGTP + H2O = dGTP + glycolate + H(+). The enzyme catalyses N(2)-(1-hydroxy-2-oxoethyl)-GTP + H2O = glycolate + GTP + H(+). It carries out the reaction N(2)-(1-hydroxy-2-oxoethyl)-GDP + H2O = glycolate + GDP + H(+). The catalysed reaction is N(2)-(1-hydroxy-2-oxoethyl)-GMP + H2O = glycolate + GMP + H(+). It catalyses the reaction an N(2)-(1-hydroxy-2-oxopropyl)-guanosine in RNA + H2O = a guanosine in RNA + lactate + H(+). The enzyme catalyses an N(2)-(1-hydroxy-2-oxopropyl)-2'-deoxyguanosine in DNA + H2O = a 2'-deoxyguanosine in DNA + lactate + H(+). It carries out the reaction an N(2)-(1-hydroxy-2-oxoethyl)-guanosine in RNA + H2O = a guanosine in RNA + glycolate + H(+). The catalysed reaction is an N(2)-(1-hydroxy-2-oxoethyl)-2'-deoxyguanosine in DNA + H2O = a 2'-deoxyguanosine in DNA + glycolate + H(+). Functionally, protein and nucleotide deglycase that catalyzes the deglycation of the Maillard adducts formed between amino groups of proteins or nucleotides and reactive carbonyl groups of glyoxals. Thus, functions as a protein deglycase that repairs methylglyoxal- and glyoxal-glycated proteins, and releases repaired proteins and lactate or glycolate, respectively. Deglycates cysteine, arginine and lysine residues in proteins, and thus reactivates these proteins by reversing glycation by glyoxals. Acts on early glycation intermediates (hemithioacetals and aminocarbinols), preventing the formation of Schiff bases and advanced glycation endproducts (AGE). Also functions as a nucleotide deglycase able to repair glycated guanine in the free nucleotide pool (GTP, GDP, GMP, dGTP) and in DNA and RNA. Is thus involved in a major nucleotide repair system named guanine glycation repair (GG repair), dedicated to reversing methylglyoxal and glyoxal damage via nucleotide sanitization and direct nucleic acid repair. Plays an important role in protecting cells from carbonyl stress. This chain is Protein/nucleic acid deglycase HchA, found in Escherichia coli O139:H28 (strain E24377A / ETEC).